Consider the following 538-residue polypeptide: Phosphatidylethanolamine transferase Mcr-2 (538 aa).

A run of 5 helical transmembrane segments spans residues 14–34 (PFVL…LTFF), 47–67 (LGFI…IVVL), 72–92 (YVLK…SYFT), 121–141 (LAFF…VAVA), and 161–181 (VSLV…ASFF). Zn(2+) contacts are provided by Glu244 and Thr283. Disulfide bonds link Cys279–Cys289, Cys354–Cys362, and Cys412–Cys420. Position 283 is a phosphothreonine (Thr283). Zn(2+) contacts are provided by Asp463 and His464.

Belongs to the phosphoethanolamine transferase family. As to quaternary structure, monomer. In terms of processing, phosphorylated at Thr-283; may represent an intermediate in the catalytic mechanism.

Its subcellular location is the cell inner membrane. The catalysed reaction is lipid A (E. coli) + a 1,2-diacyl-sn-glycero-3-phosphoethanolamine + H(+) = lipid A 4'-(2-aminoethyl diphosphate) (E. coli) + a 1,2-diacyl-sn-glycerol. Functionally, probably catalyzes the addition of a phosphoethanolamine moiety to lipid A. Phosphoethanolamine modification of lipid A confers polymyxin resistance. Confers resistance to polymyxin-type antibiotics such as colistin. In Escherichia coli, this protein is Phosphatidylethanolamine transferase Mcr-2.